The following is a 166-amino-acid chain: MRILGLDPGLRNTGWGIIDAVDNRLRHVADGVIRPDASAALAERLVQLHDGIMAVIADFSPDEAAVEETFVNMNPASTLKLGQARGVVLLVPAKSGLPVGEYAATLVKQSVVGTGRAAKEQVGMMVKTLLPGCLAATADAADALAVAICHAHHRGTQQKLARAVAR.

Active-site residues include D7, E67, and D139. 3 residues coordinate Mg(2+): D7, E67, and D139.

Belongs to the RuvC family. In terms of assembly, homodimer which binds Holliday junction (HJ) DNA. The HJ becomes 2-fold symmetrical on binding to RuvC with unstacked arms; it has a different conformation from HJ DNA in complex with RuvA. In the full resolvosome a probable DNA-RuvA(4)-RuvB(12)-RuvC(2) complex forms which resolves the HJ. Mg(2+) serves as cofactor.

Its subcellular location is the cytoplasm. It carries out the reaction Endonucleolytic cleavage at a junction such as a reciprocal single-stranded crossover between two homologous DNA duplexes (Holliday junction).. The RuvA-RuvB-RuvC complex processes Holliday junction (HJ) DNA during genetic recombination and DNA repair. Endonuclease that resolves HJ intermediates. Cleaves cruciform DNA by making single-stranded nicks across the HJ at symmetrical positions within the homologous arms, yielding a 5'-phosphate and a 3'-hydroxyl group; requires a central core of homology in the junction. The consensus cleavage sequence is 5'-(A/T)TT(C/G)-3'. Cleavage occurs on the 3'-side of the TT dinucleotide at the point of strand exchange. HJ branch migration catalyzed by RuvA-RuvB allows RuvC to scan DNA until it finds its consensus sequence, where it cleaves and resolves the cruciform DNA. The protein is Crossover junction endodeoxyribonuclease RuvC of Paramagnetospirillum magneticum (strain ATCC 700264 / AMB-1) (Magnetospirillum magneticum).